A 473-amino-acid chain; its full sequence is Fumarate hydratase class II (473 aa).

Residues 104-106, 128-131, 138-140, and Thr186 each bind substrate; these read SGT, HPND, and SSN. His187 acts as the Proton donor/acceptor in catalysis. Ser318 is an active-site residue. Substrate-binding positions include Ser319 and 324–326; that span reads KVN.

The protein belongs to the class-II fumarase/aspartase family. Fumarase subfamily. Homotetramer.

It localises to the cytoplasm. The enzyme catalyses (S)-malate = fumarate + H2O. It functions in the pathway carbohydrate metabolism; tricarboxylic acid cycle; (S)-malate from fumarate: step 1/1. Functionally, involved in the TCA cycle. Catalyzes the stereospecific interconversion of fumarate to L-malate. The chain is Fumarate hydratase class II from Corynebacterium glutamicum (strain ATCC 13032 / DSM 20300 / JCM 1318 / BCRC 11384 / CCUG 27702 / LMG 3730 / NBRC 12168 / NCIMB 10025 / NRRL B-2784 / 534).